Here is a 460-residue protein sequence, read N- to C-terminus: Chromosomal replication initiator protein DnaA (460 aa).

Residues 1-83 (MENIWLEAQT…EFHVADEKPE (83 aa)) are domain I, interacts with DnaA modulators. Basic and acidic residues predominate over residues 78 to 121 (ADEKPEAAPEEKPEKEGKPAREKEKDKDKEKEKDREKEKDKKEL). The interval 78–122 (ADEKPEAAPEEKPEKEGKPAREKEKDKDKEKEKDREKEKDKKELV) is disordered. Positions 83–123 (EAAPEEKPEKEGKPAREKEKDKDKEKEKDREKEKDKKELVP) are domain II. Residues 124–340 (NLNPKYTFES…GMLIRLEAFA (217 aa)) are domain III, AAA+ region. Residues G168, G170, K171, and T172 each coordinate ATP. The domain IV, binds dsDNA stretch occupies residues 341–460 (SLTGQEITLS…VEDIRKKLFT (120 aa)).

The protein belongs to the DnaA family. As to quaternary structure, oligomerizes as a right-handed, spiral filament on DNA at oriC.

The protein localises to the cytoplasm. In terms of biological role, plays an essential role in the initiation and regulation of chromosomal replication. ATP-DnaA binds to the origin of replication (oriC) to initiate formation of the DNA replication initiation complex once per cell cycle. Binds the DnaA box (a 9 base pair repeat at the origin) and separates the double-stranded (ds)DNA. Forms a right-handed helical filament on oriC DNA; dsDNA binds to the exterior of the filament while single-stranded (ss)DNA is stabiized in the filament's interior. The ATP-DnaA-oriC complex binds and stabilizes one strand of the AT-rich DNA unwinding element (DUE), permitting loading of DNA polymerase. After initiation quickly degrades to an ADP-DnaA complex that is not apt for DNA replication. Binds acidic phospholipids. This Geobacter sp. (strain M21) protein is Chromosomal replication initiator protein DnaA.